The following is a 214-amino-acid chain: Adenylate kinase (214 aa).

10–15 (GVGKGT) contacts ATP. Residues 30–59 (STGDILRAAVKELTPMGAKAKGYMDSGALV) are NMP. AMP-binding positions include threonine 31, arginine 36, 57 to 59 (ALV), 85 to 88 (GFPR), and glutamine 92. Residues 126–163 (GRRACANCGAGYHVDFAPSKVAGVCDACSGQLVQREDD) are LID. Arginine 127 is a binding site for ATP. Residues cysteine 130, cysteine 133, cysteine 150, and cysteine 153 each contribute to the Zn(2+) site. AMP contacts are provided by arginine 160 and arginine 171. Glycine 199 lines the ATP pocket.

This sequence belongs to the adenylate kinase family. In terms of assembly, monomer.

The protein resides in the cytoplasm. The catalysed reaction is AMP + ATP = 2 ADP. It participates in purine metabolism; AMP biosynthesis via salvage pathway; AMP from ADP: step 1/1. Catalyzes the reversible transfer of the terminal phosphate group between ATP and AMP. Plays an important role in cellular energy homeostasis and in adenine nucleotide metabolism. The chain is Adenylate kinase from Geobacter sp. (strain M21).